We begin with the raw amino-acid sequence, 197 residues long: MGGLKRKHSDLEEEEEEEKWDWSPTALRSYQQALLRISLDKVQRSLGPRAPSLRRHVLIHNTLQQLQAAIRLAPAPALPPEPLFLGEEDFSLSTTIGSILRELDTSMDEMEPPLNPAASSSPQNEIVSQADPVFLEALSSRYLGDSGLDDFFLDIDTSAVEKDVALPPPEPPHSLFCSPGSWEWNELDHIMEIILGS.

Residues 1 to 23 (MGGLKRKHSDLEEEEEEEKWDWS) form a disordered region. The SERTA domain maps to 27-74 (LRSYQQALLRISLDKVQRSLGPRAPSLRRHVLIHNTLQQLQAAIRLAP).

Interacts with RPA2.

It localises to the nucleus. The protein localises to the nucleolus. In terms of biological role, antiviral interferon-stimulated protein that plays a role in innate immunity and in the suppression of viruses through different mechanisms. Plays a role in the late phase response of TLR-induced immune effector expression. Strong transcriptional coactivator. This chain is SERTA domain-containing protein 3 (Sertad3), found in Mus musculus (Mouse).